A 110-amino-acid chain; its full sequence is Cysteine-rich and transmembrane domain-containing protein 1 (110 aa).

Positions 1–18 (MNYENPPPYASPPAPYPP) are enriched in pro residues. The interval 1 to 45 (MNYENPPPYASPPAPYPPYGQQQPSYPVPNQYPGNPPGPVGYQPA) is disordered. Residues 19-29 (YGQQQPSYPVP) are compositionally biased toward low complexity. Residues 87 to 104 (SGESACLTACWTALCCCC) form a helical membrane-spanning segment.

It belongs to the CYSTM1 family.

It localises to the membrane. In Xenopus tropicalis (Western clawed frog), this protein is Cysteine-rich and transmembrane domain-containing protein 1 (cystm1).